Consider the following 76-residue polypeptide: MAVEKFETALKKLEEVVKKLEGGELPLEDSLKAFEEGVKQAAFCSKKLNEAEKRVELLLKQKDGSFAREEFRLDDE.

It belongs to the XseB family. In terms of assembly, heterooligomer composed of large and small subunits.

Its subcellular location is the cytoplasm. It carries out the reaction Exonucleolytic cleavage in either 5'- to 3'- or 3'- to 5'-direction to yield nucleoside 5'-phosphates.. Its function is as follows. Bidirectionally degrades single-stranded DNA into large acid-insoluble oligonucleotides, which are then degraded further into small acid-soluble oligonucleotides. The chain is Exodeoxyribonuclease 7 small subunit from Geotalea uraniireducens (strain Rf4) (Geobacter uraniireducens).